Here is a 256-residue protein sequence, read N- to C-terminus: (E)-benzylidenesuccinyl-CoA hydratase (256 aa).

Glu110 acts as the Nucleophile in catalysis. Glu130 acts as the Proton acceptor in catalysis.

This sequence belongs to the enoyl-CoA hydratase/isomerase family. Homotrimer.

It catalyses the reaction (2S)-[(R)-hydroxy(phenyl)methyl]succinyl-CoA = (E)-2-benzylidenesuccinyl-CoA + H2O. It functions in the pathway xenobiotic degradation; toluene degradation. In terms of biological role, involved in an anaerobic toluene degradation pathway. Catalyzes the hydration of (E)-2-benzylidenesuccinyl-CoA to the corresponding alcohol intermediate, 2-(alpha-hydroxybenzyl)succinyl-CoA. Also accepts the N-acetylcysteamine (NAC) thioester of (E)-benzylidenesuccinate. This Thauera aromatica protein is (E)-benzylidenesuccinyl-CoA hydratase.